Consider the following 539-residue polypeptide: Zinc finger and BTB domain-containing protein 7B (539 aa).

One can recognise a BTB domain in the interval 34–115 (CDLTIRTQGL…AYTATLTTSS (82 aa)). A Phosphoserine modification is found at serine 150. The tract at residues 171-308 (ASGVPNGEDS…SPEELGSDED (138 aa)) is disordered. Pro residues predominate over residues 182–196 (PQVPLPPPPPPPPRP). Over residues 197 to 206 (VARRSRKPRK) the composition is skewed to basic residues. N6-acetyllysine; by EP300; alternate occurs at positions 206 and 212. Glycyl lysine isopeptide (Lys-Gly) (interchain with G-Cter in ubiquitin); alternate cross-links involve residues lysine 206 and lysine 212. Residues 273–282 (YEGEEEEEEL) show a composition bias toward acidic residues. An N6-acetyllysine; by EP300; alternate modification is found at lysine 335. Residue lysine 335 forms a Glycyl lysine isopeptide (Lys-Gly) (interchain with G-Cter in ubiquitin); alternate linkage. A required for interaction with and acetylation by EP300 region spans residues 344–400 (MPQECPVCHKIIHGAGKLPRHMRTHTGEKPFACEVCGVRFTRNDKLKIHMRKHTGER). A C2H2-type 1 zinc finger spans residues 346 to 368 (QECPVCHKIIHGAGKLPRHMRTH). At threonine 369 the chain carries Phosphothreonine. 2 C2H2-type zinc fingers span residues 374–396 (FACE…MRKH) and 402–424 (YSCP…MHLH). The segment at 430–454 (YECHLCHKAFAKEDHLQRHLKGQNC) adopts a C2H2-type 4; atypical zinc-finger fold. 2 disordered regions span residues 458–486 (RTRR…GLDL) and 501–539 (FWEQ…MESS). Residues 508–517 (TGPPVSTPGP) show a composition bias toward pro residues.

As to quaternary structure, homodimerizes. Interacts with NCL, NEDD4 and YBX1. Interacts with HNRNPU (via RNA-binding RGG-box region); the interaction facilitates the recruitment of long non-coding RNA Blnc1 by ZBTB7B. Interacts with HDAC4 and HDAC5; the interaction allows the recruitment of HDAC4 and HDAC5 on CD8 loci for deacetylation and possible inhibition of CD8 genes expression. Acetylated directly and specifically by EP300. EP300-mediated acetylation of Lys-206, Lys-212 and Lys-335 stabilizes the protein by antagonizing ubiquitin conjugation. Post-translationally, ubiquitinated, leading to proteasomal degradation. Competes with acetylation on Lys-206, Lys-212 and Lys-335.

It is found in the nucleus. Transcription regulator that acts as a key regulator of lineage commitment of immature T-cell precursors. Exerts distinct biological functions in the mammary epithelial cells and T cells in a tissue-specific manner. Necessary and sufficient for commitment of CD4 lineage, while its absence causes CD8 commitment. Development of immature T-cell precursors (thymocytes) to either the CD4 helper or CD8 killer T-cell lineages correlates precisely with their T-cell receptor specificity for major histocompatibility complex class II or class I molecules, respectively. Cross-antagonism between ZBTB7B and CBF complexes are determinative to CD4 versus CD8 cell fate decision. Suppresses RUNX3 expression and imposes CD4+ lineage fate by inducing the SOCS suppressors of cytokine signaling. induces, as a transcriptional activator, SOCS genes expression which represses RUNX3 expression and promotes the CD4+ lineage fate. During CD4 lineage commitment, associates with multiple sites at the CD8 locus, acting as a negative regulator of the CD8 promoter and enhancers by epigenetic silencing through the recruitment of class II histone deacetylases, such as HDAC4 and HDAC5, to these loci. Regulates the development of IL17-producing CD1d-restricted naural killer (NK) T cells. Also functions as an important metabolic regulator in the lactating mammary glands. Critical feed-forward regulator of insulin signaling in mammary gland lactation, directly regulates expression of insulin receptor substrate-1 (IRS-1) and insulin-induced Akt-mTOR-SREBP signaling. Transcriptional repressor of the collagen COL1A1 and COL1A2 genes. May also function as a repressor of fibronectin and possibly other extracellular matrix genes. Potent driver of brown fat development, thermogenesis and cold-induced beige fat formation. Recruits the brown fat lncRNA 1 (Blnc1):HNRNPU ribonucleoprotein complex to activate thermogenic gene expression in brown and beige adipocytes. The chain is Zinc finger and BTB domain-containing protein 7B from Homo sapiens (Human).